The sequence spans 37 residues: Putative preoptic regulatory factor 1 (37 aa).

2 consecutive propeptides follow at residues 1-7 (MPYSLQP) and 18-37 (FPLCMYMVRGSTWTLVPPDL).

This sequence belongs to the GnRH family. In terms of tissue distribution, preoptic area and testis.

The protein resides in the secreted. Precursor for a gonadotropin regulatory hormone (GNRH) related decapeptide. The protein is Putative preoptic regulatory factor 1 (Porf1) of Rattus norvegicus (Rat).